The sequence spans 1173 residues: Eukaryotic translation initiation factor 3 subunit A (1173 aa).

One can recognise a PCI domain in the interval 319-502 (LQRMAAHVLL…NSIYFGTDLT (184 aa)). Disordered stretches follow at residues 589–613 (QNNA…LAEQ) and 836–1173 (AAEA…PVQL). Composition is skewed to basic and acidic residues over residues 836–900 (AAEA…RGGD), 925–1011 (DRNE…EPDS), 1028–1081 (SRDD…DAAP), and 1090–1125 (DAPR…RAPK). Over residues 1128 to 1142 (GPSGGTGTAAGGGGN) the composition is skewed to gly residues. A compositionally biased stretch (basic and acidic residues) spans 1149–1165 (PRDEPAPKRDQPQDKGK).

Belongs to the eIF-3 subunit A family. In terms of assembly, component of the eukaryotic translation initiation factor 3 (eIF-3) complex. The eIF-3 complex interacts with pix.

The protein resides in the cytoplasm. Its function is as follows. RNA-binding component of the eukaryotic translation initiation factor 3 (eIF-3) complex, which is involved in protein synthesis of a specialized repertoire of mRNAs and, together with other initiation factors, stimulates binding of mRNA and methionyl-tRNAi to the 40S ribosome. The eIF-3 complex specifically targets and initiates translation of a subset of mRNAs involved in cell proliferation. The protein is Eukaryotic translation initiation factor 3 subunit A of Drosophila persimilis (Fruit fly).